Reading from the N-terminus, the 62-residue chain is Zinc metalloproteinase-disintegrin-like BaG (62 aa).

A Peptidase M12B domain is found at 24–54 (KTDLLNRSHDNAQLSPINLVVAVIMAHEMGH). An N-linked (GlcNAc...) asparagine glycan is attached at Asn29. His50 serves as a coordination point for Zn(2+). Residue Glu51 is part of the active site. His54 is a Zn(2+) binding site.

This sequence belongs to the venom metalloproteinase (M12B) family. P-III subfamily. P-IIIc sub-subfamily. In terms of assembly, dimer. It depends on Zn(2+) as a cofactor. In terms of processing, the N-terminus is blocked. In terms of tissue distribution, expressed by the venom gland.

The protein localises to the secreted. Inhibited by EDTA, and 1,10-phenanthroline. Snake venom Zinc metalloproteinase that inhibits ADP-induced platelet aggregation and inhibits the alpha-5/beta-1 (ITGA5/ITGB1) integrin, a fibronectin receptor. Has caseinolytic activity. Induces the detachment of cells that are bound to fibronectin. The polypeptide is Zinc metalloproteinase-disintegrin-like BaG (Bothrops alternatus (Urutu)).